We begin with the raw amino-acid sequence, 549 residues long: MKRVLTALAATLPFAANAADAISGAVERQPTNWQAIIMFLIFVVFTLGITYWASKRVRSRNDYYTAGGNITGFQNGLAIAGDYMSAASFLGISALVFTSGYDGLIYSLGFLVGWPIILFLIAERLRNLGRYTFADVASYRLKQGPIRILSACGSLVVVALYLIAQMVGAGKLIELLFGLNYHIAVVLVGVLMMMYVLFGGMLATTWVQIIKAVLLLFGASFMAFMVMKHVGFSFNNLFSEAMAVHPKGVDIMKPGGLVKDPISALSLGLGLMFGTAGLPHILMRFFTVSDAREARKSVFYATGFMGYFYILTFIIGFGAIMLVGANPEYKDAAGHLIGGNNMAAVHLANAVGGNLFLGFISAVAFATILAVVAGLTLAGASAVSHDLYANVFKKGATEREELRVSKITVLILGVIAIILGVLFENQNIAFMVGLAFAIAASCNFPIILLSMYWSKLTTRGAMMGGWLGLITAVVLMILGPTIWVQILGHEKAIFPYEYPALFSITVAFLGIWFFSATDNSAEGARERELFRAQFIRSQTGFGVEQGRAH.

The next 13 helical transmembrane spans lie at 33–53 (WQAI…TYWA), 77–97 (LAIA…ALVF), 103–123 (GLIY…LIAE), 148–168 (ILSA…QMVG), 183–203 (IAVV…GMLA), 206–226 (WVQI…AFMV), 262–282 (ISAL…PHIL), 303–323 (GFMG…IMLV), 355–375 (LFLG…VAGL), 404–424 (VSKI…VLFE), 428–448 (IAFM…PIIL), 464–484 (GGWL…TIWV), and 493–513 (IFPY…GIWF).

The protein belongs to the sodium:solute symporter (SSF) (TC 2.A.21) family.

It is found in the cell inner membrane. Its function is as follows. Transports acetate. The polypeptide is Cation/acetate symporter ActP (Escherichia fergusonii (strain ATCC 35469 / DSM 13698 / CCUG 18766 / IAM 14443 / JCM 21226 / LMG 7866 / NBRC 102419 / NCTC 12128 / CDC 0568-73)).